The sequence spans 165 residues: UPF0114 protein in repA1-repA2 intergenic region (165 aa).

Transmembrane regions (helical) follow at residues 15 to 35 (LMFP…VKFF), 53 to 73 (LVLI…LVMV), and 136 to 156 (IMWC…MAYI).

The protein belongs to the UPF0114 family.

The protein localises to the cell membrane. This Buchnera aphidicola subsp. Thelaxes suberi protein is UPF0114 protein in repA1-repA2 intergenic region.